The primary structure comprises 313 residues: Porphobilinogen deaminase (313 aa).

S-(dipyrrolylmethanemethyl)cysteine is present on Cys242.

The protein belongs to the HMBS family. In terms of assembly, monomer. Dipyrromethane is required as a cofactor.

The enzyme catalyses 4 porphobilinogen + H2O = hydroxymethylbilane + 4 NH4(+). The protein operates within porphyrin-containing compound metabolism; protoporphyrin-IX biosynthesis; coproporphyrinogen-III from 5-aminolevulinate: step 2/4. Its function is as follows. Tetrapolymerization of the monopyrrole PBG into the hydroxymethylbilane pre-uroporphyrinogen in several discrete steps. This chain is Porphobilinogen deaminase, found in Pseudomonas fluorescens (strain SBW25).